Reading from the N-terminus, the 376-residue chain is RING-H2 finger protein ATL46 (376 aa).

The helical transmembrane segment at 45 to 65 threads the bilayer; sequence VLFVIVILAVLFFISGLLHLL. The RING-type; atypical zinc finger occupies 143–185; sequence CAVCLCEFSEKDKLRLLPMCSHAFHLNCIDTWLQSNSTCPLCR. Composition is skewed to basic and acidic residues over residues 296–305 and 358–376; these read RLKPQDKESE and DLPK…NDGR. Disordered stretches follow at residues 296–320 and 341–376; these read RLKP…KINT and FSSD…NDGR.

It belongs to the RING-type zinc finger family. ATL subfamily.

The protein resides in the membrane. It catalyses the reaction S-ubiquitinyl-[E2 ubiquitin-conjugating enzyme]-L-cysteine + [acceptor protein]-L-lysine = [E2 ubiquitin-conjugating enzyme]-L-cysteine + N(6)-ubiquitinyl-[acceptor protein]-L-lysine.. It functions in the pathway protein modification; protein ubiquitination. The chain is RING-H2 finger protein ATL46 (ATL46) from Arabidopsis thaliana (Mouse-ear cress).